An 853-amino-acid chain; its full sequence is Lysine-specific histone demethylase 1A (853 aa).

The interval 1–177 (MLSGKKAAAA…EPEEPSGVEG (177 aa)) is disordered. Residues 7-26 (AAAAAAAAAAAAAAGTEAGS) are compositionally biased toward low complexity. Phosphothreonine is present on Thr60. Low complexity predominate over residues 76–97 (AEPPGSAGPQAGPTAGPGSATP). The residue at position 105 (Thr105) is a Phosphothreonine. Residues 111 to 152 (TSRRKRAKVEYREMDESLANLSEDEYYSEEERNAKAEKEKKL) are a coiled coil. Phosphoserine is present on residues Ser127 and Ser132. Tyr136 is modified (phosphotyrosine). Ser138 is subject to Phosphoserine. A compositionally biased stretch (basic and acidic residues) spans 139 to 152 (EEERNAKAEKEKKL). Residues 161–173 (PEEENESEPEEPS) show a composition bias toward acidic residues. Residue Ser167 is modified to Phosphoserine. The 100-residue stretch at 175 to 274 (VEGAAFQSRL…FGIYKRIKPL (100 aa)) folds into the SWIRM domain. FAD is bound by residues Ser290, Glu309, Arg311, Arg317, and 333 to 334 (MV). Positions 301–853 (FGMDVTLLEA…GVPAQQSPSM (553 aa)) are demethylase activity. Residues 429 to 515 (IEHWKKIVKT…EEKLQELEAN (87 aa)) are a coiled coil. An N6-acetyllysine mark is found at Lys433, Lys434, and Lys437. Residues Lys443 and Lys470 each participate in a glycyl lysine isopeptide (Lys-Gly) (interchain with G-Cter in SUMO2) cross-link. Lys504 participates in a covalent cross-link: Glycyl lysine isopeptide (Lys-Gly) (interchain with G-Cter in ubiquitin). Ser612 carries the post-translational modification Phosphoserine. FAD-binding positions include Glu802 and 811–812 (TV). The residue at position 850 (Ser850) is a Phosphoserine.

It belongs to the flavin monoamine oxidase family. In terms of assembly, component of a histone demethylase complex with RCOR1. Component of a BHC histone deacetylase complex that contains HDAC1, HDAC2, HMG20B, KDM1A, RCOR1 and PHF21A. The BHC complex may also contain ZMYM2, ZNF217, ZMYM3, GSE1 and GTF2I. In the complex, RCOR1 strongly enhances the demethylase activity and protects it from the proteasome while PHF21A inhibits the demethylase activity. Interacts with the androgen receptor (AR). Component of a RCOR/GFI/KDM1A/HDAC complex. Interacts directly with GFI1 and GFI1B. Interacts with SNAI1 (via SNAG domain). Interacts with INSM1. Interacts (via AOD/Tower domain) with JADE2 (via C-terminus). Interacts with ESRRB; co-occupes the core set of ESRRB targets. Interacts with SAMD1 (via WH domain); the interaction modulates KDM1A function. Interacts with RBPJ. Interacts with L3MBTL3. Interacts with ZMYND8. FAD is required as a cofactor. Post-translationally, acetylated by KAT8 in epithelial but not in mesenchymal cells, thereby regulating the epithelial-to-mesenchymal transition. Acetylation by KAT8 reduces KDM1A association with nucleosomes, thereby decreasing histone H3 demethylation, leading to transcription activatio of target genes. In terms of processing, polyubiquitinated by JADE2; which leads to its proteasomal degradation. Deubiquitinated by USP38; preventing it from degradation by the 26S proteasome. Ubiquitously expressed.

The protein resides in the nucleus. Its subcellular location is the chromosome. It catalyses the reaction N(6),N(6)-dimethyl-L-lysyl(4)-[histone H3] + 2 A + 2 H2O = L-lysyl(4)-[histone H3] + 2 formaldehyde + 2 AH2. The N-terminal sequences of INSM1 and SNAI1 compete with histone H3 for the same binding site and thereby inhibit histone demethylation (in vitro). Its function is as follows. Histone demethylase that can demethylate both 'Lys-4' (H3K4me) and 'Lys-9' (H3K9me) of histone H3, thereby acting as a coactivator or a corepressor, depending on the context. Acts by oxidizing the substrate by FAD to generate the corresponding imine that is subsequently hydrolyzed. Acts as a corepressor by mediating demethylation of H3K4me, a specific tag for epigenetic transcriptional activation. Demethylates both mono- (H3K4me1) and di-methylated (H3K4me2) H3K4me. May play a role in the repression of neuronal genes. Alone, it is unable to demethylate H3K4me on nucleosomes and requires the presence of RCOR1/CoREST to achieve such activity. Also acts as a coactivator of androgen receptor (ANDR)-dependent transcription, by being recruited to ANDR target genes and mediating demethylation of H3K9me, a specific tag for epigenetic transcriptional repression. The presence of PRKCB in ANDR-containing complexes, which mediates phosphorylation of 'Thr-6' of histone H3 (H3T6ph), a specific tag that prevents demethylation H3K4me, prevents H3K4me demethylase activity of KDM1A. Demethylates di-methylated 'Lys-370' of p53/TP53 which prevents interaction of p53/TP53 with TP53BP1 and represses p53/TP53-mediated transcriptional activation. Demethylates and stabilizes the DNA methylase DNMT1. Demethylates methylated 'Lys-44' and methylated 'Lys-119' of SOX2. Required for gastrulation during embryogenesis. Component of a RCOR/GFI/KDM1A/HDAC complex that suppresses, via histone deacetylase (HDAC) recruitment, a number of genes implicated in multilineage blood cell development. Facilitates epithelial-to-mesenchymal transition by acting as an effector of SNAI1-mediated transcription repression of epithelial markers E-cadherin/CDH1, CDN7 and KRT8. Required for the maintenance of the silenced state of the SNAI1 target genes E-cadherin/CDH1 and CDN7. Required for the repression of GIPR expression. The chain is Lysine-specific histone demethylase 1A from Mus musculus (Mouse).